The sequence spans 354 residues: Protein RecA (354 aa).

67–74 (GPESSGKT) is an ATP binding site.

It belongs to the RecA family.

The protein resides in the cytoplasm. Functionally, can catalyze the hydrolysis of ATP in the presence of single-stranded DNA, the ATP-dependent uptake of single-stranded DNA by duplex DNA, and the ATP-dependent hybridization of homologous single-stranded DNAs. It interacts with LexA causing its activation and leading to its autocatalytic cleavage. The protein is Protein RecA of Hamiltonella defensa subsp. Acyrthosiphon pisum (strain 5AT).